The primary structure comprises 94 residues: Sapecin (94 aa).

The signal sequence occupies residues 1 to 23 (MKSFIVLAVTLCLAAFFMGQSVA). The propeptide occupies 24-54 (SPAAAAEESKFVDGLHALKTIEPELHGRYKR). Intrachain disulfides connect C57–C84, C70–C90, and C74–C92.

Belongs to the invertebrate defensin family. Type 1 subfamily. Hemocytes and fat body.

The protein resides in the secreted. In terms of biological role, sapecins, which are potent bactericidal proteins, are produced in response to injury. Sapecin is cytotoxic to Gram-positive bacteria, and to a lesser extent against Gram-negative bacteria. In Sarcophaga peregrina (Flesh fly), this protein is Sapecin.